A 385-amino-acid polypeptide reads, in one-letter code: Succinate--CoA ligase [ADP-forming] subunit beta (385 aa).

In terms of domain architecture, ATP-grasp spans 9–244 (KEVLRKYGVS…LDEEDPKEIE (236 aa)). Residues lysine 46, 53–55 (GRG), glutamate 99, cysteine 102, and glutamate 107 contribute to the ATP site. Mg(2+) is bound by residues asparagine 199 and aspartate 213. Position 220 is a phosphoserine (serine 220). Substrate contacts are provided by residues asparagine 264 and 321-323 (GIM).

Belongs to the succinate/malate CoA ligase beta subunit family. Heterotetramer of two alpha and two beta subunits. Interacts with BrxC. Mg(2+) serves as cofactor.

It carries out the reaction succinate + ATP + CoA = succinyl-CoA + ADP + phosphate. The enzyme catalyses GTP + succinate + CoA = succinyl-CoA + GDP + phosphate. The protein operates within carbohydrate metabolism; tricarboxylic acid cycle; succinate from succinyl-CoA (ligase route): step 1/1. Succinyl-CoA synthetase functions in the citric acid cycle (TCA), coupling the hydrolysis of succinyl-CoA to the synthesis of either ATP or GTP and thus represents the only step of substrate-level phosphorylation in the TCA. The beta subunit provides nucleotide specificity of the enzyme and binds the substrate succinate, while the binding sites for coenzyme A and phosphate are found in the alpha subunit. The polypeptide is Succinate--CoA ligase [ADP-forming] subunit beta (Bacillus subtilis (strain 168)).